The chain runs to 518 residues: Pumilio homolog 14 (518 aa).

2 disordered regions span residues 26-46 (TMASSSSQPQPISSPFHQPEN) and 77-114 (VGQNGDSIHLPRRTNQVFTGSSSGGAGDDNGYLLPPMG). The segment covering 29 to 44 (SSSSQPQPISSPFHQP) has biased composition (low complexity). In terms of domain architecture, PUM-HD spans 178 to 518 (YTNRFGYEGY…GNKVLEKLNI (341 aa)). One copy of the Pumilio 1; degenerate repeat lies at 206-235 (SAFAKDKEMSERLGMSIFQGTKETVDAIYN). Pumilio repeat units lie at residues 236-271 (GLIGDICELMVDPYGSDVVQLLMRRCSSEQIVQLVD), 275-313 (QQMFQFVNICIDSLGTNAIQVLLTCINERAKDQIPRIVD), 314-348 (VVRTVALQLSKSNHAIFVILACFRLFPLHCRLLLE), 349-387 (LIVQNCHQIAIDQHGCCLLQLCFNKDRVPNLEIRQRLIM), 388-423 (EAIANALRLCLNCYGNYVVQYIVELNNRYLIDALVR), 424-459 (QLIGNYAHLARNKYGSHAVQKLLKLRWIDSRVIVID), and 460-494 (LLREIDTLLLDPFGNYVIQTAWFVSKDDVRRMLRY).

It is found in the cytoplasm. Its subcellular location is the nucleus. Functionally, sequence-specific RNA-binding protein that regulates translation and mRNA stability by binding the 3'-UTR of target mRNAs. In Arabidopsis thaliana (Mouse-ear cress), this protein is Pumilio homolog 14 (APUM14).